A 230-amino-acid polypeptide reads, in one-letter code: Phosphatidate cytidylyltransferase (230 aa).

A run of 6 helical transmembrane segments spans residues 33–53 (FVIA…LVGT), 67–87 (IPDL…LIFL), 95–115 (WLIM…MIGG), 133–153 (WSGL…VSFI), 167–187 (IYLF…DLFI), and 206–226 (HGGV…LFLM).

Belongs to the CDS family.

The protein localises to the cell membrane. The enzyme catalyses a 1,2-diacyl-sn-glycero-3-phosphate + CTP + H(+) = a CDP-1,2-diacyl-sn-glycerol + diphosphate. It participates in phospholipid metabolism; CDP-diacylglycerol biosynthesis; CDP-diacylglycerol from sn-glycerol 3-phosphate: step 3/3. The sequence is that of Phosphatidate cytidylyltransferase (cdsA) from Rickettsia conorii (strain ATCC VR-613 / Malish 7).